A 129-amino-acid polypeptide reads, in one-letter code: Succinate dehydrogenase assembly factor 3, mitochondrial (129 aa).

A mitochondrion-targeting transit peptide spans 1-21 (MQVNHLLRQAVKQTTRAGRLG).

This sequence belongs to the complex I LYR family. SDHAF3 subfamily. In terms of assembly, interacts with the iron-sulfur protein subunit within the SDH catalytic dimer.

It localises to the mitochondrion matrix. Its function is as follows. Plays an essential role in the assembly of succinate dehydrogenase (SDH), an enzyme complex (also referred to as respiratory complex II) that is a component of both the tricarboxylic acid (TCA) cycle and the mitochondrial electron transport chain, and which couples the oxidation of succinate to fumarate with the reduction of ubiquinone (coenzyme Q) to ubiquinol. Promotes maturation of the iron-sulfur protein subunit of the SDH catalytic dimer, protecting it from the deleterious effects of oxidants. May act together with SDHAF1. The chain is Succinate dehydrogenase assembly factor 3, mitochondrial from Kluyveromyces lactis (strain ATCC 8585 / CBS 2359 / DSM 70799 / NBRC 1267 / NRRL Y-1140 / WM37) (Yeast).